A 165-amino-acid polypeptide reads, in one-letter code: NADH-quinone oxidoreductase subunit I (165 aa).

2 consecutive 4Fe-4S ferredoxin-type domains span residues Arg-57–Glu-86 and Ser-96–Ile-125. Cys-66, Cys-69, Cys-72, Cys-76, Cys-105, Cys-108, Cys-111, and Cys-115 together coordinate [4Fe-4S] cluster.

Belongs to the complex I 23 kDa subunit family. In terms of assembly, NDH-1 is composed of 14 different subunits. Subunits NuoA, H, J, K, L, M, N constitute the membrane sector of the complex. [4Fe-4S] cluster serves as cofactor.

The protein resides in the cell inner membrane. The catalysed reaction is a quinone + NADH + 5 H(+)(in) = a quinol + NAD(+) + 4 H(+)(out). Its function is as follows. NDH-1 shuttles electrons from NADH, via FMN and iron-sulfur (Fe-S) centers, to quinones in the respiratory chain. The immediate electron acceptor for the enzyme in this species is believed to be ubiquinone. Couples the redox reaction to proton translocation (for every two electrons transferred, four hydrogen ions are translocated across the cytoplasmic membrane), and thus conserves the redox energy in a proton gradient. This Polaromonas sp. (strain JS666 / ATCC BAA-500) protein is NADH-quinone oxidoreductase subunit I.